Reading from the N-terminus, the 351-residue chain is Putative NBPF family member NBPF5 (351 aa).

Coiled-coil stretches lie at residues 10–43 and 69–115; these read SERA…EKFL and DSVL…KLRE. Positions 157–285 are disordered; that stretch reads HLVHKLSPEN…VPPRHHDKSN (129 aa). A compositionally biased stretch (acidic residues) spans 165–179; sequence ENDEDEDEDEDDKDE. The Olduvai domain maps to 174–261; the sequence is EDDKDEEVEK…EEEEALNIPP (88 aa). Residues 192–202 show a composition bias toward basic and acidic residues; sequence EVQKTEEKEVP. Low complexity predominate over residues 214–226; the sequence is SNSHNPSNSNQPH. 2 stretches are compositionally biased toward basic and acidic residues: residues 232–251 and 264–273; these read TFKE…HPHD and QNDHEEEEGK.

Belongs to the NBPF family. In terms of tissue distribution, expressed in brain and medulla.

Its subcellular location is the cytoplasm. In Homo sapiens (Human), this protein is Putative NBPF family member NBPF5.